The chain runs to 132 residues: Small ribosomal subunit protein uS8 (132 aa).

This sequence belongs to the universal ribosomal protein uS8 family. In terms of assembly, part of the 30S ribosomal subunit. Contacts proteins S5 and S12.

Its function is as follows. One of the primary rRNA binding proteins, it binds directly to 16S rRNA central domain where it helps coordinate assembly of the platform of the 30S subunit. In Mycolicibacterium gilvum (strain PYR-GCK) (Mycobacterium gilvum (strain PYR-GCK)), this protein is Small ribosomal subunit protein uS8.